The sequence spans 302 residues: Segregation and condensation protein A (302 aa).

It belongs to the ScpA family. As to quaternary structure, component of a cohesin-like complex composed of ScpA, ScpB and the Smc homodimer, in which ScpA and ScpB bind to the head domain of Smc. The presence of the three proteins is required for the association of the complex with DNA.

The protein resides in the cytoplasm. Participates in chromosomal partition during cell division. May act via the formation of a condensin-like complex containing Smc and ScpB that pull DNA away from mid-cell into both cell halves. This is Segregation and condensation protein A from Xylella fastidiosa (strain 9a5c).